Here is a 684-residue protein sequence, read N- to C-terminus: Pre-mRNA-splicing factor CLF1 (684 aa).

HAT repeat units lie at residues 43-75, 77-109, 111-143, 145-176, 178-209, 211-251, 253-285, 295-327, 332-364, 374-410, 412-443, 445-477, 518-550, and 584-622; these read DWQR…FEFD, KDIR…SEIK, KNIN…LEES, GNQG…FETR, LNFE…FEQT, GDIS…WEAS, GEYE…FEKK, IVIA…LVEE, QLTS…ICVR, NDLP…FEIR, NNLL…LEIR, KEFD…LEEN, AEYE…FEST, and ENKH…YEKV.

Belongs to the crooked-neck family. In terms of assembly, associated with the spliceosome.

It is found in the nucleus. Its function is as follows. Involved in pre-mRNA splicing and cell cycle progression. Required for the spliceosome assembly and initiation of the DNA replication. In Kluyveromyces lactis (strain ATCC 8585 / CBS 2359 / DSM 70799 / NBRC 1267 / NRRL Y-1140 / WM37) (Yeast), this protein is Pre-mRNA-splicing factor CLF1 (CLF1).